Reading from the N-terminus, the 432-residue chain is MAPSYQKSEEMFEQAQRIIPGGVNSPVRAFKSVGMNPPFIARANGSRMWDVDGNEYIDYICSWGPQILGHRHPAVIHALQDCLEKGTTYGAPTDLEVTLAQMLTEALPSVEMVRMVNSGTEATMSALRLARAYTNRSKIIKFEGCYHGHHDSLLIKAGSGALTHGVPTSPGVPENIASNTINARYNDLELLEKIFTEVGSDIAAIIVEPLAGNMGVVPPAEGFLQGLRDLCNKHSALLIFDEVITGFRLSYGGAQAYYNVMPDLTCLGKIIGGGLPVGAYGGRREIMQMVSPAGPVYQAGTLSGNPLAMTAGIATLKQLQQPGVYEELDYKSDLLAQGLIQAAKAAGVEASFNRVQSLQTCFFTQQDVRDFATASSSDTKQYAAFFRNMLEQGIYLAPAQFEATFVSLAHTENDIERTVEAAFNAFRAAAKE.

Lys-269 carries the post-translational modification N6-(pyridoxal phosphate)lysine.

The protein belongs to the class-III pyridoxal-phosphate-dependent aminotransferase family. HemL subfamily. In terms of assembly, homodimer. It depends on pyridoxal 5'-phosphate as a cofactor.

Its subcellular location is the cytoplasm. It catalyses the reaction (S)-4-amino-5-oxopentanoate = 5-aminolevulinate. Its pathway is porphyrin-containing compound metabolism; protoporphyrin-IX biosynthesis; 5-aminolevulinate from L-glutamyl-tRNA(Glu): step 2/2. The protein is Glutamate-1-semialdehyde 2,1-aminomutase of Desulforamulus reducens (strain ATCC BAA-1160 / DSM 100696 / MI-1) (Desulfotomaculum reducens).